The primary structure comprises 102 residues: Small ribosomal subunit protein uS10 (102 aa).

This sequence belongs to the universal ribosomal protein uS10 family. As to quaternary structure, part of the 30S ribosomal subunit.

Functionally, involved in the binding of tRNA to the ribosomes. This is Small ribosomal subunit protein uS10 from Lactiplantibacillus plantarum (strain ATCC BAA-793 / NCIMB 8826 / WCFS1) (Lactobacillus plantarum).